We begin with the raw amino-acid sequence, 38 residues long: Humanin-like protein (38 aa).

In the testis, expressed in Leydig cells at 10, 20 and 60 days of age (at protein level). Also expressed in pachytene spermatocytes at day 20 and in vessels, peritubular cells and spermatids at day 60. Not detected in Sertoli cells (at protein level). In the adult ovary, expressed in stromal cells, granulosa cells, theca cells and oocytes at diestrus and proestrus (at protein level). Expressed in the anterior pituitary where it is detected in lactotropes and somatotropes with lower levels in females than males (at protein level). In the hippocampus, expressed in astrocytes but not in neurons or oligodendrocytes (at protein level). Expressed in muscle, liver and hypothalamus but not in epididymal fat (at protein level). Widely expressed with highest levels in cardiac and skeletal muscle and lowest levels in lung, testis and uterus. In the CNS, levels are relatively high in the cerebellum and cortex and low in the hippocampus. In the hippocampus, lower levels are detected in ovariectomized animals than in controls.

It localises to the mitochondrion. It is found in the secreted. The protein resides in the cytoplasm. Its function is as follows. Plays a role as a neuroprotective factor. Protects against neuronal cell death induced by amyloid-beta peptides. Also protects against excitotoxic cell death. Prevents amyloid-beta peptide-induced spatial learning and memory impairments, protects against amyloid-beta peptide-induced suppression of hippocampal long-term potentiation, and inhibits amyloid-beta peptide-induced activation of STAT3 and inhibition of CASP3. Prevents glutamate-induced dendritic atrophy in hippocampal neurons and also prevents glutamate-induced decrease in SYP puncta number and total puncta area. Protects anterior pituitary cells from TNF-induced apoptosis. Plays a role in ovarian follicle development by acting as a cryoprotective factor for granulosa cells in the antral follicle. Increases androgen production in Leydig cells and promotes Leydig cell survival by preventing apoptosis. In Rattus norvegicus (Rat), this protein is Humanin-like protein.